Consider the following 442-residue polypeptide: UDP-N-acetylmuramate--L-alanine ligase (442 aa).

G109–S115 is a binding site for ATP.

It belongs to the MurCDEF family.

It is found in the cytoplasm. The enzyme catalyses UDP-N-acetyl-alpha-D-muramate + L-alanine + ATP = UDP-N-acetyl-alpha-D-muramoyl-L-alanine + ADP + phosphate + H(+). It participates in cell wall biogenesis; peptidoglycan biosynthesis. Its function is as follows. Cell wall formation. The protein is UDP-N-acetylmuramate--L-alanine ligase of Streptococcus pyogenes serotype M2 (strain MGAS10270).